A 792-amino-acid polypeptide reads, in one-letter code: Vicilin Car i 2.0101 (792 aa).

An N-terminal signal peptide occupies residues 1–26 (MVTKAKIPLFLFLSALFLALVCSSLA). Disordered stretches follow at residues 132-153 (ERRE…DPRE), 182-217 (RFEE…YRQC), 240-272 (ERLE…EQRY), 302-325 (EERE…CQRR), and 350-394 (QQGR…ESGE). Basic and acidic residues-rich tracts occupy residues 182–200 (RFEE…RGRD) and 207–217 (PRDPREQYRQC). Basic and acidic residues predominate over residues 302–314 (EERERQRGRDRQD). Residues 315 to 325 (PQQQYHRCQRR) show a composition bias toward low complexity. A compositionally biased stretch (basic and acidic residues) spans 350–375 (QQGREWGPDQASPRRESRGREEEQQR). Y379 is a binding site for Cu cation. 2 consecutive Cupin type-1 domains span residues 384–537 (QGLR…DRLE) and 582–754 (ISLK…EEIE). Cu cation contacts are provided by C652, H654, and H698. Residues 727–754 (LAGQNNIINQLEREAKELSFNMPREEIE) adopt a coiled-coil conformation.

Belongs to the 7S seed storage protein family. Homotrimer. In terms of tissue distribution, expressed in seed (at protein level). Expressed in seed.

Functionally, seed storage protein. The chain is Vicilin Car i 2.0101 from Carya illinoinensis (Pecan).